We begin with the raw amino-acid sequence, 93 residues long: Large ribosomal subunit protein uL23cz/uL23cy (93 aa).

This sequence belongs to the universal ribosomal protein uL23 family. Part of the 50S ribosomal subunit.

The protein resides in the plastid. The protein localises to the chloroplast. Functionally, binds to 23S rRNA. In Piper cenocladum (Ant piper), this protein is Large ribosomal subunit protein uL23cz/uL23cy (rpl23-A).